Here is an 83-residue protein sequence, read N- to C-terminus: Sulfur carrier protein TusA (83 aa).

Cysteine 19 (cysteine persulfide intermediate) is an active-site residue.

The protein belongs to the sulfur carrier protein TusA family.

Its subcellular location is the cytoplasm. Sulfur carrier protein which probably makes part of a sulfur-relay system. The chain is Sulfur carrier protein TusA from Vibrio atlanticus (strain LGP32) (Vibrio splendidus (strain Mel32)).